The sequence spans 77 residues: Acyl carrier protein (77 aa).

Residues 2 to 77 (ADVMERVTKI…DVVDYINNNQ (76 aa)) enclose the Carrier domain. Ser-37 bears the O-(pantetheine 4'-phosphoryl)serine mark.

It belongs to the acyl carrier protein (ACP) family. 4'-phosphopantetheine is transferred from CoA to a specific serine of apo-ACP by AcpS. This modification is essential for activity because fatty acids are bound in thioester linkage to the sulfhydryl of the prosthetic group.

It is found in the cytoplasm. Its pathway is lipid metabolism; fatty acid biosynthesis. Carrier of the growing fatty acid chain in fatty acid biosynthesis. In Shouchella clausii (strain KSM-K16) (Alkalihalobacillus clausii), this protein is Acyl carrier protein.